The chain runs to 532 residues: Muscarinic acetylcholine receptor M5 (532 aa).

Residues 1–29 (MEGDSYHNATTVNGTPVNHQPLERHRLWE) are Extracellular-facing. The N-linked (GlcNAc...) asparagine glycan is linked to N8. The helical transmembrane segment at 30–53 (VITIAAVTAVVSLITIVGNVLVMI) threads the bilayer. Over 54-66 (SFKVNSQLKTVNN) the chain is Cytoplasmic. Residues 67–87 (YYLLSLACADLIIGIFSMNLY) form a helical membrane-spanning segment. Over 88–104 (TTYILMGRWALGSLACD) the chain is Extracellular. A disulfide bridge links C103 with C183. Residues 105–126 (LWLALDYVASNASVMNLLVISF) traverse the membrane as a helical segment. The Cytoplasmic portion of the chain corresponds to 127–146 (DRYFSITRPLTYRAKRTPKR). Residues 147–169 (AGIMIGLAWLISFILWAPAILCW) traverse the membrane as a helical segment. Topologically, residues 170-191 (QYLVGKRTVPLDECQIQFLSEP) are extracellular. A helical transmembrane segment spans residues 192–214 (TITFGTAIAAFYIPVSVMTILYC). Residues 215–443 (RIYRETEKRT…LVKERKAAQT (229 aa)) are Cytoplasmic-facing. The interval 262–294 (AQRERNQASWSSSRRSTSTTGKPSQATGPSANW) is disordered. Residues 270-281 (SWSSSRRSTSTT) show a composition bias toward low complexity. Polar residues predominate over residues 282–291 (GKPSQATGPS). A helical membrane pass occupies residues 444-464 (LSAILLAFIITWTPYNIMVLV). Residues 465–478 (STFCDKCVPVTLWH) are Extracellular-facing. The chain crosses the membrane as a helical span at residues 479–498 (LGYWLCYVNSTVNPICYALC). Over 499–532 (NRTFRKTFKMLLLCRWKKKKVEEKLYWQGNSKLP) the chain is Cytoplasmic. 2 positions are modified to phosphothreonine: T501 and T505.

It belongs to the G-protein coupled receptor 1 family. Muscarinic acetylcholine receptor subfamily. CHRM5 sub-subfamily.

It localises to the cell membrane. The protein localises to the postsynaptic cell membrane. Its function is as follows. The muscarinic acetylcholine receptor mediates various cellular responses, including inhibition of adenylate cyclase, breakdown of phosphoinositides and modulation of potassium channels through the action of G proteins. Primary transducing effect is Pi turnover. In Homo sapiens (Human), this protein is Muscarinic acetylcholine receptor M5 (CHRM5).